The following is a 364-amino-acid chain: MAQELMFEEPRRGKPPRHLADFDAEGRASAVAALGLPPFRAKQLAHQYYGRLIADPRQMTDLPAAVRDQIAETMFPNLLTAAREVTCDAGQTRKTLWRATDGVTVESVLMRYPQRNTVCISSQAGCGMACPFCATGQGGLTRNLSTAEIVEQVRAAAAALRDEFGDRLSNVVFMGLGEPLANYARVLAAVRRITEPPPTGFGISARSVTVSTVGLAPAIRKLADERLGVTLALSLHAPDDELRDTLVPVNNRWKISEALEAAHYYAEVTGRRVSVEYALIREVNDQPWRADLLGKRLHGALGPLVHVNLIPLNPTPGSDWDASPKPVEREFVKRVRAQGVSCTVRDTRGREISAACGQLAAEGG.

Catalysis depends on glutamate 106, which acts as the Proton acceptor. Residues 112-350 form the Radical SAM core domain; the sequence is YPQRNTVCIS…SCTVRDTRGR (239 aa). Residues cysteine 119 and cysteine 356 are joined by a disulfide bond. [4Fe-4S] cluster-binding residues include cysteine 126, cysteine 130, and cysteine 133. S-adenosyl-L-methionine contacts are provided by residues 177–178, serine 211, 234–236, and asparagine 313; these read GE and SLH. Cysteine 356 (S-methylcysteine intermediate) is an active-site residue.

It belongs to the radical SAM superfamily. RlmN family. Requires [4Fe-4S] cluster as cofactor.

The protein localises to the cytoplasm. It carries out the reaction adenosine(2503) in 23S rRNA + 2 reduced [2Fe-2S]-[ferredoxin] + 2 S-adenosyl-L-methionine = 2-methyladenosine(2503) in 23S rRNA + 5'-deoxyadenosine + L-methionine + 2 oxidized [2Fe-2S]-[ferredoxin] + S-adenosyl-L-homocysteine. The enzyme catalyses adenosine(37) in tRNA + 2 reduced [2Fe-2S]-[ferredoxin] + 2 S-adenosyl-L-methionine = 2-methyladenosine(37) in tRNA + 5'-deoxyadenosine + L-methionine + 2 oxidized [2Fe-2S]-[ferredoxin] + S-adenosyl-L-homocysteine. Specifically methylates position 2 of adenine 2503 in 23S rRNA and position 2 of adenine 37 in tRNAs. This is Probable dual-specificity RNA methyltransferase RlmN from Mycobacterium ulcerans (strain Agy99).